The primary structure comprises 536 residues: MSKFVFVTGGVVSSIGKGIVAASLGRLLKSRGYSVSILKLDPYLNVDPGTMSPFQHGEVFVTEDGAETDLDLGHYERFTDTAMTRLNSVTTGSIYQAVINKERRGSYNGGTVQVIPHITGEIRERIHRVAANSNADIIITEIGGTVGDIESLPFLEAIREFKNDVNRNDVAYIHVTLLPYIKTSGEIKTKPTQHSVKELRSIGIQPDLLVCRSDKSINEALKKKLSGFCGVSINSVIEALDADSIYSVPLSLKKEGLCKETLNYLELEDKKCDLKNWEQLIHNLRNPGGPIKVALVGKYIELGDAYLSVVEALRHACIEQKALLDLHWVSAEMIEKNSAETYLNEVDAIVVPGGFGNRGVNGKIAAIKFARENKIPFLGLCLGMQCAVIEWARNVAHLPDASSSELDPNTPNPVIHLLPEQQDVVDLGGTMRLGVYPCRLTKNTTGKNLYDEDVIYERHRHRYEFNNYYKQSFLDSGYKISGTSPDGRLVELIELENHPYFLACQYHPEFLSRPGKPHPLFKGLIKASQDKLTQSN.

The segment at 1-267 is amidoligase domain; it reads MSKFVFVTGG…CKETLNYLEL (267 aa). S13 is a binding site for CTP. S13 is a binding site for UTP. ATP contacts are provided by residues 14 to 19 and D71; that span reads SIGKGI. D71 and E141 together coordinate Mg(2+). CTP contacts are provided by residues 148-150, 188-193, and K224; these read DIE and KTKPTQ. UTP is bound by residues 188–193 and K224; that span reads KTKPTQ. A Glutamine amidotransferase type-1 domain is found at 292-534; the sequence is KVALVGKYIE…IKASQDKLTQ (243 aa). G354 serves as a coordination point for L-glutamine. The active-site Nucleophile; for glutamine hydrolysis is C381. Residues 382–385, E405, and R462 each bind L-glutamine; that span reads LGMQ. Residues H507 and E509 contribute to the active site.

This sequence belongs to the CTP synthase family. In terms of assembly, homotetramer.

It carries out the reaction UTP + L-glutamine + ATP + H2O = CTP + L-glutamate + ADP + phosphate + 2 H(+). The catalysed reaction is L-glutamine + H2O = L-glutamate + NH4(+). The enzyme catalyses UTP + NH4(+) + ATP = CTP + ADP + phosphate + 2 H(+). Its pathway is pyrimidine metabolism; CTP biosynthesis via de novo pathway; CTP from UDP: step 2/2. Its activity is regulated as follows. Allosterically activated by GTP, when glutamine is the substrate; GTP has no effect on the reaction when ammonia is the substrate. The allosteric effector GTP functions by stabilizing the protein conformation that binds the tetrahedral intermediate(s) formed during glutamine hydrolysis. Inhibited by the product CTP, via allosteric rather than competitive inhibition. In terms of biological role, catalyzes the ATP-dependent amination of UTP to CTP with either L-glutamine or ammonia as the source of nitrogen. Regulates intracellular CTP levels through interactions with the four ribonucleotide triphosphates. The polypeptide is CTP synthase (Prochlorococcus marinus (strain MIT 9301)).